Consider the following 230-residue polypeptide: 6-carboxyhexanoate--CoA ligase (230 aa).

Belongs to the BioW family. In terms of assembly, homodimer. The cofactor is Mg(2+).

It carries out the reaction heptanedioate + ATP + CoA = 6-carboxyhexanoyl-CoA + AMP + diphosphate. Its pathway is metabolic intermediate metabolism; pimeloyl-CoA biosynthesis; pimeloyl-CoA from pimelate: step 1/1. Its function is as follows. Catalyzes the transformation of pimelate into pimeloyl-CoA with concomitant hydrolysis of ATP to AMP. This Staphylococcus aureus (strain MRSA252) protein is 6-carboxyhexanoate--CoA ligase.